Here is a 172-residue protein sequence, read N- to C-terminus: Type IV secretion system putative outer membrane lipoprotein BAB2_0057 (172 aa).

The first 15 residues, 1-15, serve as a signal peptide directing secretion; that stretch reads MRTLVMVACAVSLAA. Residue C16 is the site of N-palmitoyl cysteine attachment. Residue C16 is the site of S-diacylglycerol cysteine attachment. In terms of domain architecture, OmpA-like spans 58–172; sequence WPARPPKQTV…RRVDIEILRK (115 aa).

Its subcellular location is the cell outer membrane. Its function is as follows. The virB operon is essential for intracellular survival and is not involved in the invasion process. Constitutes a major determinant of virulence in mice. This protein is essential for pathogenesis in mice but is not required for intracellular survival. In Brucella abortus (strain 2308), this protein is Type IV secretion system putative outer membrane lipoprotein BAB2_0057.